A 400-amino-acid chain; its full sequence is Elongation factor Tu (400 aa).

A tr-type G domain is found at 10 to 209 (KPHVNVGTIG…AVDSYIPTPE (200 aa)). The interval 19–26 (GHVDHGKT) is G1. Residue 19–26 (GHVDHGKT) coordinates GTP. T26 is a binding site for Mg(2+). Residues 60–64 (GITIS) are G2. The interval 81–84 (DCPG) is G3. GTP contacts are provided by residues 81 to 85 (DCPGH) and 136 to 139 (NKAD). The tract at residues 136–139 (NKAD) is G4. Residues 174-176 (SGL) are G5.

This sequence belongs to the TRAFAC class translation factor GTPase superfamily. Classic translation factor GTPase family. EF-Tu/EF-1A subfamily. Monomer.

Its subcellular location is the cytoplasm. The catalysed reaction is GTP + H2O = GDP + phosphate + H(+). Functionally, GTP hydrolase that promotes the GTP-dependent binding of aminoacyl-tRNA to the A-site of ribosomes during protein biosynthesis. In Desulfitobacterium hafniense (strain DSM 10664 / DCB-2), this protein is Elongation factor Tu.